The sequence spans 562 residues: Probable E3 ubiquitin-protein ligase ARI7 (562 aa).

Residues 1–39 (MDSEEDMLDAHDMESGEDDFYSGGTDDCNDSDDGEPDYG) are disordered. Acidic residues predominate over residues 27 to 39 (DCNDSDDGEPDYG). The tract at residues 133-346 (SELTCGICFD…GGFYACNRYE (214 aa)) is TRIAD supradomain. Zn(2+) is bound by residues C137, C140, C154, H156, C159, C162, C182, C187, C226, C231, C248, C250, C255, C258, H263, C268, C295, and C298. The RING-type 1 zinc finger occupies 137–187 (CGICFDSYPPEKIASVSCGHPFCTTCWTGYISTTINDGPGCLMLRCPDPSC). The IBR-type zinc-finger motif lies at 206–268 (EKYNRYFLRS…TEEAHRPVDC (63 aa)). Residues 295–325 (CPRCKRPIEKNQGCMHMTCTPPCKYEFCWLC) form an RING-type 2; atypical zinc finger. C308 is an active-site residue. 6 residues coordinate Zn(2+): C313, C317, C322, C325, H332, and C342. Residues 524–562 (ACSSKSTSSKSTGCSSKTRGKGKGSSRTGGSSRNPDDNL) are disordered. Positions 525-540 (CSSKSTSSKSTGCSSK) are enriched in low complexity.

It belongs to the RBR family. Ariadne subfamily. Zn(2+) is required as a cofactor. In terms of tissue distribution, ubiquitous.

It catalyses the reaction [E2 ubiquitin-conjugating enzyme]-S-ubiquitinyl-L-cysteine + [acceptor protein]-L-lysine = [E2 ubiquitin-conjugating enzyme]-L-cysteine + [acceptor protein]-N(6)-ubiquitinyl-L-lysine.. Its pathway is protein modification; protein ubiquitination. Its function is as follows. Might act as an E3 ubiquitin-protein ligase, or as part of E3 complex, which accepts ubiquitin from specific E2 ubiquitin-conjugating enzymes and then transfers it to substrates. This is Probable E3 ubiquitin-protein ligase ARI7 (ARI7) from Arabidopsis thaliana (Mouse-ear cress).